The chain runs to 500 residues: Glycerol kinase (500 aa).

An ADP-binding site is contributed by T17. Positions 17, 18, and 19 each coordinate ATP. T17 lines the sn-glycerol 3-phosphate pocket. R21 contacts ADP. Residues R87, E88, Y139, and D243 each coordinate sn-glycerol 3-phosphate. The glycerol site is built by R87, E88, Y139, D243, and Q244. ADP contacts are provided by T265 and G308. 4 residues coordinate ATP: T265, G308, Q312, and G409. G409 and N413 together coordinate ADP.

The protein belongs to the FGGY kinase family.

It carries out the reaction glycerol + ATP = sn-glycerol 3-phosphate + ADP + H(+). It functions in the pathway polyol metabolism; glycerol degradation via glycerol kinase pathway; sn-glycerol 3-phosphate from glycerol: step 1/1. With respect to regulation, inhibited by fructose 1,6-bisphosphate (FBP). In terms of biological role, key enzyme in the regulation of glycerol uptake and metabolism. Catalyzes the phosphorylation of glycerol to yield sn-glycerol 3-phosphate. This is Glycerol kinase from Pseudomonas fluorescens (strain Pf0-1).